Reading from the N-terminus, the 208-residue chain is Proteasome subunit beta 2 (208 aa).

Positions 1–14 are cleaved as a propeptide — removed in mature form; by autocatalysis; that stretch reads MGNELQLENKILKG. Threonine 15 acts as the Nucleophile in catalysis.

The protein belongs to the peptidase T1B family. As to quaternary structure, the 20S proteasome core is composed of 14 alpha and 14 beta subunits that assemble into four stacked heptameric rings, resulting in a barrel-shaped structure. The two inner rings, each composed of seven catalytic beta subunits, are sandwiched by two outer rings, each composed of seven alpha subunits. The catalytic chamber with the active sites is on the inside of the barrel. Has a gated structure, the ends of the cylinder being occluded by the N-termini of the alpha-subunits. Is capped at one or both ends by the proteasome regulatory ATPase, PAN.

Its subcellular location is the cytoplasm. It catalyses the reaction Cleavage of peptide bonds with very broad specificity.. With respect to regulation, the formation of the proteasomal ATPase PAN-20S proteasome complex, via the docking of the C-termini of PAN into the intersubunit pockets in the alpha-rings, triggers opening of the gate for substrate entry. Interconversion between the open-gate and close-gate conformations leads to a dynamic regulation of the 20S proteasome proteolysis activity. Functionally, component of the proteasome core, a large protease complex with broad specificity involved in protein degradation. This chain is Proteasome subunit beta 2, found in Saccharolobus solfataricus (strain ATCC 35092 / DSM 1617 / JCM 11322 / P2) (Sulfolobus solfataricus).